The following is a 511-amino-acid chain: Bifunctional purine biosynthesis protein PurH (511 aa).

The region spanning 1 to 145 (MKRRAIISVS…KNHAYVTAVV (145 aa)) is the MGS-like domain.

Belongs to the PurH family.

The enzyme catalyses (6R)-10-formyltetrahydrofolate + 5-amino-1-(5-phospho-beta-D-ribosyl)imidazole-4-carboxamide = 5-formamido-1-(5-phospho-D-ribosyl)imidazole-4-carboxamide + (6S)-5,6,7,8-tetrahydrofolate. The catalysed reaction is IMP + H2O = 5-formamido-1-(5-phospho-D-ribosyl)imidazole-4-carboxamide. The protein operates within purine metabolism; IMP biosynthesis via de novo pathway; 5-formamido-1-(5-phospho-D-ribosyl)imidazole-4-carboxamide from 5-amino-1-(5-phospho-D-ribosyl)imidazole-4-carboxamide (10-formyl THF route): step 1/1. It participates in purine metabolism; IMP biosynthesis via de novo pathway; IMP from 5-formamido-1-(5-phospho-D-ribosyl)imidazole-4-carboxamide: step 1/1. The chain is Bifunctional purine biosynthesis protein PurH from Anoxybacillus flavithermus (strain DSM 21510 / WK1).